The following is a 91-amino-acid chain: Large ribosomal subunit protein eL37 (91 aa).

Zn(2+)-binding residues include Cys19, Cys22, Cys34, and Cys37. The segment at 19–37 (CRRCGKSSFHIQKKTCASC) adopts a C4-type zinc-finger fold.

Belongs to the eukaryotic ribosomal protein eL37 family. Requires Zn(2+) as cofactor.

Its function is as follows. Binds to the 23S rRNA. The chain is Large ribosomal subunit protein eL37 (rpl37) from Dictyostelium discoideum (Social amoeba).